Here is a 583-residue protein sequence, read N- to C-terminus: Pentatricopeptide repeat-containing protein At3g59040 (583 aa).

PPR repeat units lie at residues Ser138–Pro172, Asn173–Pro207, Ser208–Pro242, Asp246–Gln280, Ser281–Pro312, Asp313–Pro347, Thr348–Pro382, Asp383–Pro417, Asn418–Ala452, and Asn453–Pro487. The tract at residues Val525–Leu583 is disordered. Residues Ser528–Ala556 are compositionally biased toward acidic residues. Residues Arg557 to Gln566 are compositionally biased toward basic and acidic residues.

The protein belongs to the PPR family. P subfamily.

The protein is Pentatricopeptide repeat-containing protein At3g59040 of Arabidopsis thaliana (Mouse-ear cress).